The following is an 81-amino-acid chain: Short neurotoxin 2 (81 aa).

The N-terminal stretch at 1–21 (MKTLLLTLVVVTIVCLDLGYT) is a signal peptide. 4 disulfides stabilise this stretch: cysteine 24-cysteine 43, cysteine 38-cysteine 60, cysteine 62-cysteine 73, and cysteine 74-cysteine 79.

The protein belongs to the three-finger toxin family. Short-chain subfamily. Type I alpha-neurotoxin sub-subfamily. In terms of tissue distribution, expressed by the venom gland.

The protein localises to the secreted. Binds to muscle nicotinic acetylcholine receptor (nAChR) and inhibit acetylcholine from binding to the receptor, thereby impairing neuromuscular transmission. This Hydrophis hardwickii (Hardwick's spine-bellied seasnake) protein is Short neurotoxin 2.